The primary structure comprises 59 residues: Large ribosomal subunit protein uL30 (59 aa).

Belongs to the universal ribosomal protein uL30 family. Part of the 50S ribosomal subunit.

The protein is Large ribosomal subunit protein uL30 of Clostridium botulinum (strain Alaska E43 / Type E3).